A 313-amino-acid polypeptide reads, in one-letter code: Dehydrogenase/reductase SDR family member 1 (313 aa).

An NAD(+)-binding site is contributed by Ile-19. Omega-N-methylarginine is present on Arg-21. Asp-64 is an NAD(+) binding site. Residue Ser-151 participates in substrate binding. NAD(+) contacts are provided by Tyr-163, Lys-167, and Thr-198. The active-site Proton acceptor is Tyr-163.

This sequence belongs to the short-chain dehydrogenases/reductases (SDR) family.

The protein resides in the endoplasmic reticulum. It catalyses the reaction 17alpha-estradiol + NADP(+) = estrone + NADPH + H(+). It carries out the reaction testosterone + NADP(+) = androst-4-ene-3,17-dione + NADPH + H(+). The catalysed reaction is prostaglandin E1 + NADPH + H(+) = prostaglandin F1 + NADP(+). The enzyme catalyses isatin + NADPH + H(+) = 3-hydroxyindolin-2-one + NADP(+). In terms of biological role, NADPH-dependent oxidoreductase which catalyzes the reduction of some steroids (estrone, androstene-3,17-dione and cortisone) as well as prostaglandin E1, isatin and xenobiotics in vitro. May have a role in steroid and/or xenobiotic metabolism. This Mus musculus (Mouse) protein is Dehydrogenase/reductase SDR family member 1.